The sequence spans 498 residues: Glycerol kinase (498 aa).

ADP is bound at residue threonine 12. Threonine 12, threonine 13, and serine 14 together coordinate ATP. A sn-glycerol 3-phosphate-binding site is contributed by threonine 12. Arginine 16 lines the ADP pocket. Sn-glycerol 3-phosphate contacts are provided by arginine 82, glutamate 83, tyrosine 134, and aspartate 243. 5 residues coordinate glycerol: arginine 82, glutamate 83, tyrosine 134, aspartate 243, and glutamine 244. 2 residues coordinate ADP: threonine 265 and glycine 308. ATP contacts are provided by threonine 265, glycine 308, glutamine 312, and glycine 411. ADP is bound at residue glycine 411.

This sequence belongs to the FGGY kinase family.

It carries out the reaction glycerol + ATP = sn-glycerol 3-phosphate + ADP + H(+). Its pathway is polyol metabolism; glycerol degradation via glycerol kinase pathway; sn-glycerol 3-phosphate from glycerol: step 1/1. With respect to regulation, inhibited by fructose 1,6-bisphosphate (FBP). In terms of biological role, key enzyme in the regulation of glycerol uptake and metabolism. Catalyzes the phosphorylation of glycerol to yield sn-glycerol 3-phosphate. The chain is Glycerol kinase from Brucella canis (strain ATCC 23365 / NCTC 10854 / RM-666).